A 472-amino-acid chain; its full sequence is Sulfate adenylyltransferase subunit 1 (472 aa).

One can recognise a tr-type G domain in the interval 22-239 (KELLRFLTCG…TVPIAGDKNY (218 aa)). The G1 stretch occupies residues 31–38 (GSVDDGKS). 31–38 (GSVDDGKS) lines the GTP pocket. The tract at residues 89–93 (GITID) is G2. The tract at residues 110-113 (DTPG) is G3. GTP contacts are provided by residues 110–114 (DTPGH) and 165–168 (NKMD). Residues 165–168 (NKMD) are G4. The G5 stretch occupies residues 202–204 (SAL).

This sequence belongs to the TRAFAC class translation factor GTPase superfamily. Classic translation factor GTPase family. CysN/NodQ subfamily. As to quaternary structure, heterodimer composed of CysD, the smaller subunit, and CysN.

The catalysed reaction is sulfate + ATP + H(+) = adenosine 5'-phosphosulfate + diphosphate. The protein operates within sulfur metabolism; hydrogen sulfide biosynthesis; sulfite from sulfate: step 1/3. Its function is as follows. With CysD forms the ATP sulfurylase (ATPS) that catalyzes the adenylation of sulfate producing adenosine 5'-phosphosulfate (APS) and diphosphate, the first enzymatic step in sulfur assimilation pathway. APS synthesis involves the formation of a high-energy phosphoric-sulfuric acid anhydride bond driven by GTP hydrolysis by CysN coupled to ATP hydrolysis by CysD. This chain is Sulfate adenylyltransferase subunit 1, found in Cellvibrio japonicus (strain Ueda107) (Pseudomonas fluorescens subsp. cellulosa).